A 396-amino-acid chain; its full sequence is Elongation factor Tu (396 aa).

The 196-residue stretch at 10–205 (KPHVNIGTIG…ACDESIPDPE (196 aa)) folds into the tr-type G domain. The G1 stretch occupies residues 19-26 (GHVDHGKT). 19-26 (GHVDHGKT) serves as a coordination point for GTP. T26 is a Mg(2+) binding site. Residues 62–66 (GITIN) form a G2 region. The tract at residues 83–86 (DAPG) is G3. Residues 83-87 (DAPGH) and 138-141 (NKCD) contribute to the GTP site. The segment at 138 to 141 (NKCD) is G4. The segment at 175–177 (SAL) is G5.

It belongs to the TRAFAC class translation factor GTPase superfamily. Classic translation factor GTPase family. EF-Tu/EF-1A subfamily. In terms of assembly, monomer.

Its subcellular location is the cytoplasm. It catalyses the reaction GTP + H2O = GDP + phosphate + H(+). GTP hydrolase that promotes the GTP-dependent binding of aminoacyl-tRNA to the A-site of ribosomes during protein biosynthesis. The chain is Elongation factor Tu from Corynebacterium jeikeium (strain K411).